The primary structure comprises 432 residues: Putative D-alanyl-D-alanine carboxypeptidase (432 aa).

A helical; Signal-anchor transmembrane segment spans residues 7–25 (ATVLLTFSLSAFAVEYPVL).

Belongs to the peptidase S12 family. YfeW subfamily.

It is found in the cell inner membrane. The enzyme catalyses Preferential cleavage: (Ac)2-L-Lys-D-Ala-|-D-Ala. Also transpeptidation of peptidyl-alanyl moieties that are N-acyl substituents of D-alanine.. In Salmonella typhimurium (strain LT2 / SGSC1412 / ATCC 700720), this protein is Putative D-alanyl-D-alanine carboxypeptidase.